We begin with the raw amino-acid sequence, 88 residues long: Small ribosomal subunit protein bS20 (88 aa).

Disordered regions lie at residues 1–22 (MPNI…AQNA) and 69–88 (KNAA…GLSA).

Belongs to the bacterial ribosomal protein bS20 family.

Functionally, binds directly to 16S ribosomal RNA. In Shouchella clausii (strain KSM-K16) (Alkalihalobacillus clausii), this protein is Small ribosomal subunit protein bS20.